The sequence spans 402 residues: GTPase Obg (402 aa).

The region spanning 1–159 is the Obg domain; it reads MRFIDEAIVT…KELKFELKVV (159 aa). Residues 160–334 form the OBG-type G domain; it reads ADVGLIGLPN…VKYHLMNEIE (175 aa). GTP-binding positions include 166–173, 191–195, 213–216, 283–286, and 315–317; these read GLPNAGKS, FTTLV, DIPG, NKID, and STL. Residues Ser-173 and Thr-193 each coordinate Mg(2+). The disordered stretch occupies residues 382-402; that stretch reads AAFNNELDDDDDDGVEVVYAP. The segment covering 387-396 has biased composition (acidic residues); it reads ELDDDDDDGV.

The protein belongs to the TRAFAC class OBG-HflX-like GTPase superfamily. OBG GTPase family. In terms of assembly, monomer. The cofactor is Mg(2+).

It is found in the cytoplasm. An essential GTPase which binds GTP, GDP and possibly (p)ppGpp with moderate affinity, with high nucleotide exchange rates and a fairly low GTP hydrolysis rate. Plays a role in control of the cell cycle, stress response, ribosome biogenesis and in those bacteria that undergo differentiation, in morphogenesis control. The chain is GTPase Obg from Psychrobacter sp. (strain PRwf-1).